A 541-amino-acid polypeptide reads, in one-letter code: 5' exonuclease Apollo (541 aa).

Lysine 334 is covalently cross-linked (Glycyl lysine isopeptide (Lys-Gly) (interchain with G-Cter in SUMO2)). Disordered stretches follow at residues 350–375 (TQGV…KKHK) and 450–489 (IGLG…TTHL). Residues 358–371 (PEEKADQVKVDRDS) show a composition bias toward basic and acidic residues. The TBM signature appears at 492–507 (ESGGLALKYLLTPVDF).

This sequence belongs to the DNA repair metallo-beta-lactamase (DRMBL) family. As to quaternary structure, interacts with TERF2; the interaction is direct. Interacts with MUS81, MRE11 and FANCD2. Interacts with HSPA2, HSPA8 and HSPA14. Interacts with SPAG5. Post-translationally, ubiquitinated, leading to its degradation. Interaction with TERF2 protects it from ubiquitination.

The protein resides in the chromosome. Its subcellular location is the telomere. It is found in the nucleus. The protein localises to the cytoplasm. It localises to the cytoskeleton. The protein resides in the microtubule organizing center. Its subcellular location is the centrosome. It carries out the reaction a beta-lactam + H2O = a substituted beta-amino acid. In terms of biological role, 5'-3' exonuclease that plays a central role in telomere maintenance and protection during S-phase. Participates in the protection of telomeres against non-homologous end-joining (NHEJ)-mediated repair, thereby ensuring that telomeres do not fuse. Plays a key role in telomeric loop (T loop) formation by being recruited by TERF2 at the leading end telomeres and by processing leading-end telomeres immediately after their replication via its exonuclease activity: generates 3' single-stranded overhang at the leading end telomeres avoiding blunt leading-end telomeres that are vulnerable to end-joining reactions and expose the telomere end in a manner that activates the DNA repair pathways. Together with TERF2, required to protect telomeres from replicative damage during replication by controlling the amount of DNA topoisomerase (TOP1, TOP2A and TOP2B) needed for telomere replication during fork passage and prevent aberrant telomere topology. Also involved in response to DNA damage: plays a role in response to DNA interstrand cross-links (ICLs) by facilitating double-strand break formation. In case of spindle stress, involved in prophase checkpoint. Possesses beta-lactamase activity, catalyzing the hydrolysis of penicillin G and nitrocefin. Exhibits no activity towards other beta-lactam antibiotic classes including cephalosporins (cefotaxime) and carbapenems (imipenem). This Rattus norvegicus (Rat) protein is 5' exonuclease Apollo (Dclre1b).